Reading from the N-terminus, the 313-residue chain is NADH-ubiquinone oxidoreductase chain 1 (313 aa).

The next 8 membrane-spanning stretches (helical) occupy residues 6-26 (LLSG…FTLL), 71-91 (VFPF…LWIL), 105-125 (MLLF…AGWF), 149-169 (MSLI…SMIM), 173-193 (FFVW…VSCV), 220-242 (GVGF…VLVI), 255-275 (FGMG…WVRA), and 293-313 (YLPS…ILNG).

The protein belongs to the complex I subunit 1 family.

The protein resides in the mitochondrion inner membrane. It carries out the reaction a ubiquinone + NADH + 5 H(+)(in) = a ubiquinol + NAD(+) + 4 H(+)(out). Its function is as follows. Core subunit of the mitochondrial membrane respiratory chain NADH dehydrogenase (Complex I) that is believed to belong to the minimal assembly required for catalysis. Complex I functions in the transfer of electrons from NADH to the respiratory chain. The immediate electron acceptor for the enzyme is believed to be ubiquinone. This is NADH-ubiquinone oxidoreductase chain 1 (ND1) from Heterololigo bleekeri (Spear squid).